The following is a 522-amino-acid chain: 2-isopropylmalate synthase (522 aa).

Residues 5–267 (VIIFDTTLRD…ETGINAKEIH (263 aa)) form the Pyruvate carboxyltransferase domain. Mn(2+) contacts are provided by D14, H202, H204, and N238. The interval 392–522 (QLQQLVVQSD…MQKNRELGGV (131 aa)) is regulatory domain.

This sequence belongs to the alpha-IPM synthase/homocitrate synthase family. LeuA type 1 subfamily. Homodimer. Requires Mn(2+) as cofactor.

It is found in the cytoplasm. It carries out the reaction 3-methyl-2-oxobutanoate + acetyl-CoA + H2O = (2S)-2-isopropylmalate + CoA + H(+). It participates in amino-acid biosynthesis; L-leucine biosynthesis; L-leucine from 3-methyl-2-oxobutanoate: step 1/4. Its function is as follows. Catalyzes the condensation of the acetyl group of acetyl-CoA with 3-methyl-2-oxobutanoate (2-ketoisovalerate) to form 3-carboxy-3-hydroxy-4-methylpentanoate (2-isopropylmalate). This is 2-isopropylmalate synthase from Shewanella baltica (strain OS195).